A 396-amino-acid polypeptide reads, in one-letter code: Aspartate aminotransferase (396 aa).

L-aspartate is bound by residues Gly34, Trp130, and Asn183. An N6-(pyridoxal phosphate)lysine modification is found at Lys246. Arg374 serves as a coordination point for L-aspartate.

This sequence belongs to the class-I pyridoxal-phosphate-dependent aminotransferase family. In terms of assembly, homodimer. It depends on pyridoxal 5'-phosphate as a cofactor.

The protein localises to the cytoplasm. The catalysed reaction is L-aspartate + 2-oxoglutarate = oxaloacetate + L-glutamate. The polypeptide is Aspartate aminotransferase (aspC) (Haemophilus influenzae (strain ATCC 51907 / DSM 11121 / KW20 / Rd)).